The sequence spans 398 residues: Protein ELC (398 aa).

The 145-residue stretch at 18–162 (ALSQRGPSSV…ARDPPLYSRR (145 aa)) folds into the UEV domain. The tract at residues 157-202 (PLYSRRRPQPPPPSPPTVYDSSLSRPPSADQSLPRPFPPSPYGGGV) is disordered. A compositionally biased stretch (polar residues) spans 175–187 (YDSSLSRPPSADQ). The stretch at 247 to 291 (EAEAEELLSLQAGLKRREDELNIGLKEMVEEKETLEQQLQIISMN) forms a coiled coil. The SB domain occupies 322–390 (DTLSKQMLEC…RAAQMEVQVA (69 aa)).

The protein belongs to the ubiquitin-conjugating enzyme family. UEV subfamily. Component of the endosomal sorting required for transport complex I (ESCRT-I), composed of ELC, VPS28 and VPS37. Interacts with VPS28 and VPS37. Binds ubiquitin in vitro. Interacts with FREE1. Interacts with TOL9/TOM1D. Interacts with BRO1/ALIX. Interacts with SINAT1, SINAT2, SINAT3 and SINAT4. In terms of processing, ubiquitinated by SINAT1, SINAT2, SINAT3 and SINAT4 for subsequent proteasomal degradation. In terms of tissue distribution, expressed in roots, stems, leaves and flowers.

The protein resides in the early endosome. It is found in the late endosome. Its subcellular location is the prevacuolar compartment. Its function is as follows. Component of the ESCRT-I complex (endosomal sorting complex required for transport I), a regulator of vesicular trafficking process. Required for the sorting of endocytic ubiquitinated cargos into multivesicular bodies (MVBs). May control nuclear division through the microtubule cytoskeleton. The sequence is that of Protein ELC from Arabidopsis thaliana (Mouse-ear cress).